A 119-amino-acid polypeptide reads, in one-letter code: Large ribosomal subunit protein bL19 (119 aa).

This sequence belongs to the bacterial ribosomal protein bL19 family.

This protein is located at the 30S-50S ribosomal subunit interface and may play a role in the structure and function of the aminoacyl-tRNA binding site. This Limosilactobacillus fermentum (strain NBRC 3956 / LMG 18251) (Lactobacillus fermentum) protein is Large ribosomal subunit protein bL19.